The sequence spans 928 residues: Neuropilin-1 (928 aa).

The first 21 residues, 1 to 21, serve as a signal peptide directing secretion; the sequence is MLLRLLSCCCWLLCSLRSSWA. The Extracellular segment spans residues 22 to 860; that stretch reads SRNDKCGDTI…PGNVLKTLDP (839 aa). 3 disulfide bridges follow: cysteine 27–cysteine 54, cysteine 82–cysteine 104, and cysteine 147–cysteine 173. CUB domains are found at residues 27–141 and 147–265; these read CGDT…YEVF and CSRN…FSVV. Asparagine 150 is a glycosylation site (N-linked (GlcNAc...) asparagine). Ca(2+) contacts are provided by glutamate 195, aspartate 209, and aspartate 250. The cysteines at positions 206 and 228 are disulfide-linked. Residues asparagine 261, asparagine 300, and asparagine 523 are each glycosylated (N-linked (GlcNAc...) asparagine). Cystine bridges form between cysteine 275-cysteine 424 and cysteine 431-cysteine 584. F5/8 type C domains lie at 275–424 and 431–584; these read CKEA…LYGC and CSRM…LLGC. O-linked (Xyl...) (chondroitin sulfate) serine; alternate glycosylation is present at serine 613. A glycan (O-linked (Xyl...) (heparan sulfate) serine; alternate) is linked at serine 613. A disordered region spans residues 624–645; the sequence is GATGQSTETPTVEASPEEPDMT. The segment covering 625-635 has biased composition (polar residues); sequence ATGQSTETPTV. Residues 646–812 enclose the MAM domain; sequence HSDLDCKFGW…NHISPSQCRA (167 aa). The O-linked (Xyl...) (chondroitin sulfate) serine glycan is linked to serine 834. Residue asparagine 844 is glycosylated (N-linked (GlcNAc...) asparagine). The helical transmembrane segment at 861–883 threads the bilayer; sequence ILITIIAMSALGVLLGAICGVVL. The Cytoplasmic segment spans residues 884 to 928; it reads YCACWHNGMSERNLSALENYNFELVDGVKLKKDKLNTQNSYSEAS.

The protein belongs to the neuropilin family. In terms of assembly, homodimer, and heterodimer. Retinal ganglion cells and visual center neurons.

The protein localises to the mitochondrion membrane. It is found in the cell membrane. Functionally, receptor involved in the development of the cardiovascular system, in angiogenesis, in the formation of certain neuronal circuits and in organogenesis outside the nervous system. Mediates the chemorepulsant activity of semaphorins. Binding to VEGFA initiates a signaling pathway needed for motor neuron axon guidance and cell body migration, including for the caudal migration of facial motor neurons from rhombomere 4 to rhombomere 6 during embryonic development. Regulates mitochondrial iron transport via interaction. In Xenopus laevis (African clawed frog), this protein is Neuropilin-1 (nrp1).